The chain runs to 203 residues: Small ribosomal subunit protein uS4 (203 aa).

The 66-residue stretch at 93 to 158 (LRLDNVVYRL…QQLVTRFLDL (66 aa)) folds into the S4 RNA-binding domain.

Belongs to the universal ribosomal protein uS4 family. In terms of assembly, part of the 30S ribosomal subunit. Contacts protein S5. The interaction surface between S4 and S5 is involved in control of translational fidelity.

In terms of biological role, one of the primary rRNA binding proteins, it binds directly to 16S rRNA where it nucleates assembly of the body of the 30S subunit. Its function is as follows. With S5 and S12 plays an important role in translational accuracy. The sequence is that of Small ribosomal subunit protein uS4 from Akkermansia muciniphila (strain ATCC BAA-835 / DSM 22959 / JCM 33894 / BCRC 81048 / CCUG 64013 / CIP 107961 / Muc).